The chain runs to 351 residues: MSRVNATMFDDMDIPRGRFGKPPRKITNVNFWHVVVDEFTEGIVQCMEARERLGLLCTISTNEGSITSFDIHKDMWCQMVIWSAYRFFAMMDKMFSIETITNFTETDLTETGQWRIFYRTWDVRDALKMKQVGPFLPALFSFHLENWTTMLSIGINKGYDRHNTRNMFMTIQSARNVLSGAMEVARYAVVLALPVCEYRTPLGLPDDSIGNAIKTCCTQMQANRLTETGISKDSGHKINDSSEEELYYRTIHDLIKPNREHCISCNIENSMDIDPTIHHRSSNVITLQGTSTYPFGRRPMSRMDVGGLMYQHPYICRNLHLRPPRSRLMNSKILQTFRQSFNRSNPHAYPI.

This is an uncharacterized protein from Gallus gallus (Chicken).